The chain runs to 3147 residues: Bassianolide nonribosomal cyclodepsipeptide synthetase (3147 aa).

Over residues 1–12 the composition is skewed to polar residues; sequence MEPPNNANTGQL. The disordered stretch occupies residues 1–23; it reads MEPPNNANTGQLGPTLPNGTVDL. The condensation 1 stretch occupies residues 69 to 454; that stretch reads HVVYEIPEDV…INKLQSTDGS (386 aa). The adenylation 1 stretch occupies residues 495 to 887; the sequence is DDTPNKPAVC…GRMDSQVKIR (393 aa). One can recognise a Carrier 1 domain in the interval 1015–1091; sequence PDASAGVTKL…SLQAAIGGSS (77 aa). O-(pantetheine 4'-phosphoryl)serine is present on Ser1052. The tract at residues 1109-1538 is condensation 2; it reads SYSQGRLWFL…QTLISVVPLT (430 aa). The adenylation 2 stretch occupies residues 1567–1973; sequence FATQVASYPD…GRMDFQFKIR (407 aa). The S-adenosyl-L-methionine-dependent N-methyltransferase (MT) stretch occupies residues 2041-2181; sequence TYTELDTVSS…FPTRDYLEQV (141 aa). 2 consecutive Carrier domains span residues 2515-2589 and 2615-2689; these read FPLS…RQQL and APTT…EVSQ. O-(pantetheine 4'-phosphoryl)serine occurs at positions 2549 and 2649. The segment at 2735 to 3139 is condensation 3; the sequence is QDVYLATHLQ…THLMEQVCNT (405 aa).

The protein belongs to the NRP synthetase family.

Functionally, bassianolide nonribosomal synthetase that mediates the biosynthesis of bassianolide (BSL), a non-ribosomal cyclodepsipeptide that shows insecticidal and cancer cell antiproliferative activity. BSLS first catalyzes the iterative synthesis of an enzyme-bound dipeptidol monomer intermediate from D-2-hydroxyisovalerate and L-leucine before performing the condensation and cyclization of 4 dipeptidol monomers to yield the cyclic tetrameric ester bassianolide. The N-methyltransferase MT domain is responsible for the methylation of the leucine residues of bassianolide. BSLS is flexible with both the amino acid and hydroxyl acid precursors, and produces bassianolide as the major product (containing N-methyl-L-Leu), together with small amounts of beauvericin and its analogs beauvericins A-C (containing N-methyl-L-Phe). This chain is Bassianolide nonribosomal cyclodepsipeptide synthetase, found in Beauveria bassiana (strain ARSEF 2860) (White muscardine disease fungus).